The sequence spans 97 residues: Small ribosomal subunit protein uS17 (97 aa).

Positions 1-20 (MSEATVNDNAAVKNEKGARK) are disordered.

It belongs to the universal ribosomal protein uS17 family. In terms of assembly, part of the 30S ribosomal subunit.

Its function is as follows. One of the primary rRNA binding proteins, it binds specifically to the 5'-end of 16S ribosomal RNA. The sequence is that of Small ribosomal subunit protein uS17 from Corynebacterium jeikeium (strain K411).